The primary structure comprises 258 residues: Eukaryotic translation initiation factor 3 subunit J (258 aa).

Positions 1–11 (MAAAAAAAGDS) are enriched in low complexity. Residues 1 to 108 (MAAAAAAAGD…LEEPEEPKVL (108 aa)) are disordered. Residue Ala2 is modified to N-acetylalanine. The interval 2 to 69 (AAAAAAAGDS…KEEAEVKPEV (68 aa)) is sufficient for interaction with EIF3B. Residues Ser11, Ser13, and Ser20 each carry the phosphoserine modification. The span at 40-59 (EGEDEDEDVKDNWDDDDDEK) shows a compositional bias: acidic residues. The segment covering 60 to 106 (KEEAEVKPEVKISEKKKIAEKIKEKERQQKKRQEEIKKRLEEPEEPK) has biased composition (basic and acidic residues). Positions 70–135 (KISEKKKIAE…ESDLELAKET (66 aa)) form a coiled coil. Lys106 is covalently cross-linked (Glycyl lysine isopeptide (Lys-Gly) (interchain with G-Cter in SUMO2)). Thr109 bears the Phosphothreonine mark. Ser127 carries the post-translational modification Phosphoserine. Positions 217–238 (SKAKKKKKGVVPGGGLKATMKD) are disordered. The promotes stable association with the 40S ribosome stretch occupies residues 243 to 258 (YGGYDGGYVQDYEDFM). Tyr254 carries the phosphotyrosine modification.

In terms of assembly, component of the eukaryotic translation initiation factor 3 (eIF-3) complex, which is composed of 13 subunits: EIF3A, EIF3B, EIF3C, EIF3D, EIF3E, EIF3F, EIF3G, EIF3H, EIF3I, EIF3J, EIF3K, EIF3L and EIF3M. The eIF-3 complex appears to include 3 stable modules: module A is composed of EIF3A, EIF3B, EIF3G and EIF3I; module B is composed of EIF3F, EIF3H, and EIF3M; and module C is composed of EIF3C, EIF3D, EIF3E, EIF3K and EIF3L. EIF3C of module C binds EIF3B of module A and EIF3H of module B, thereby linking the three modules. EIF3J is a labile subunit that binds to the eIF-3 complex via EIF3B. The eIF-3 complex interacts with RPS6KB1 under conditions of nutrient depletion. Mitogenic stimulation leads to binding and activation of a complex composed of MTOR and RPTOR, leading to phosphorylation and release of RPS6KB1 and binding of EIF4B to eIF-3. Post-translationally, phosphorylated. Phosphorylation is enhanced upon serum stimulation.

It localises to the cytoplasm. Its function is as follows. Component of the eukaryotic translation initiation factor 3 (eIF-3) complex, which is required for several steps in the initiation of protein synthesis. The eIF-3 complex associates with the 40S ribosome and facilitates the recruitment of eIF-1, eIF-1A, eIF-2:GTP:methionyl-tRNAi and eIF-5 to form the 43S pre-initiation complex (43S PIC). The eIF-3 complex stimulates mRNA recruitment to the 43S PIC and scanning of the mRNA for AUG recognition. The eIF-3 complex is also required for disassembly and recycling of post-termination ribosomal complexes and subsequently prevents premature joining of the 40S and 60S ribosomal subunits prior to initiation. The eIF-3 complex specifically targets and initiates translation of a subset of mRNAs involved in cell proliferation, including cell cycling, differentiation and apoptosis, and uses different modes of RNA stem-loop binding to exert either translational activation or repression. In Homo sapiens (Human), this protein is Eukaryotic translation initiation factor 3 subunit J.